A 565-amino-acid polypeptide reads, in one-letter code: Maturase K (565 aa).

It belongs to the intron maturase 2 family. MatK subfamily.

It localises to the plastid. The protein resides in the chloroplast. Its function is as follows. Usually encoded in the trnK tRNA gene intron. Probably assists in splicing its own and other chloroplast group II introns. The polypeptide is Maturase K (Staurastrum punctulatum (Green alga)).